A 137-amino-acid chain; its full sequence is Ribosomal RNA large subunit methyltransferase H (137 aa).

S-adenosyl-L-methionine-binding positions include Leu56, Gly85, and 104 to 109 (LSPLTF).

It belongs to the RNA methyltransferase RlmH family. Homodimer.

It is found in the cytoplasm. The enzyme catalyses pseudouridine(1915) in 23S rRNA + S-adenosyl-L-methionine = N(3)-methylpseudouridine(1915) in 23S rRNA + S-adenosyl-L-homocysteine + H(+). Specifically methylates the pseudouridine at position 1915 (m3Psi1915) in 23S rRNA. This chain is Ribosomal RNA large subunit methyltransferase H, found in Prochlorococcus marinus (strain MIT 9515).